The chain runs to 82 residues: Small ribosomal subunit protein bS18 (82 aa).

The disordered stretch occupies residues 1–20 (MSEASSAPVRRPFHRRRKTC).

This sequence belongs to the bacterial ribosomal protein bS18 family. In terms of assembly, part of the 30S ribosomal subunit. Forms a tight heterodimer with protein bS6.

Binds as a heterodimer with protein bS6 to the central domain of the 16S rRNA, where it helps stabilize the platform of the 30S subunit. The protein is Small ribosomal subunit protein bS18 of Rhizobium etli (strain CIAT 652).